We begin with the raw amino-acid sequence, 177 residues long: Large ribosomal subunit protein uL6 (177 aa).

Belongs to the universal ribosomal protein uL6 family. Part of the 50S ribosomal subunit.

This protein binds to the 23S rRNA, and is important in its secondary structure. It is located near the subunit interface in the base of the L7/L12 stalk, and near the tRNA binding site of the peptidyltransferase center. This chain is Large ribosomal subunit protein uL6, found in Novosphingobium aromaticivorans (strain ATCC 700278 / DSM 12444 / CCUG 56034 / CIP 105152 / NBRC 16084 / F199).